The sequence spans 261 residues: MLKDVQNERDNRNIYLKRVGVKDLRYPIVVLDRTNVTQNTIATLNMFVDLPKDYRGTHMSRFIEVLNEYHLEINPKRIKEILRSLKKVLNAKRSVIEITFPFFLLKKAPVTGSESYLEYTCSFEAEMNGDHLDFSTTVTAPIHTLCPCSKEISEYGAHNQRAKCSVTFKSKEMVWIEDIIEIIEESASAPIFTLLKRADEKYVTEHAYDNPKFVEDVARDVALRLKKYDKIEWYKVEVESFESIHAHNAYACLTSDEIEKI.

This sequence belongs to the GTP cyclohydrolase IV family.

The catalysed reaction is GTP + H2O = 7,8-dihydroneopterin 3'-triphosphate + formate + H(+). It participates in cofactor biosynthesis; 7,8-dihydroneopterin triphosphate biosynthesis; 7,8-dihydroneopterin triphosphate from GTP: step 1/1. Its function is as follows. Converts GTP to 7,8-dihydroneopterin triphosphate. In Fervidobacterium nodosum (strain ATCC 35602 / DSM 5306 / Rt17-B1), this protein is GTP cyclohydrolase FolE2.